A 112-amino-acid chain; its full sequence is Protein preY, mitochondrial (112 aa).

The transit peptide at 1-34 directs the protein to the mitochondrion; that stretch reads MLTTTCRRLSQALQRPHALSAVAQRCLRAPGARS. In terms of domain architecture, TRM112 spans 49–95; sequence HPALLQFLVCPLSKKPLRYDASTNELINDELGIAYPIIDGVPNMIPQ.

The protein belongs to the PREY family. Interacts (via TRM112 domain) with NDUFAF5; the interaction is direct and stabilizes NDUFAF5 protein. Interacts with COQ5; the interaction is direct, stabilizes COQ5 protein and associates PYURF with COQ enzyme complex.

Its subcellular location is the mitochondrion. In terms of biological role, in mitochondria, S-adenosylmethionine-dependent methyltransferase chaperone that supports both coenzyme Q biosynthesis, by stabilizing its components, such as COQ5, and NADH:ubiquinone oxidoreductase complex (complex I, MT-ND1) assembly, by stabilizing complex I assembly factors, such as NDUFAF5. This chain is Protein preY, mitochondrial (Pyurf), found in Rattus norvegicus (Rat).